Here is a 765-residue protein sequence, read N- to C-terminus: BRCA1-associated RING domain protein 1 (765 aa).

Residues 20–113 (MEPATDGLWA…KLQNLLHDNK (94 aa)) form a required for BRCA1 binding region. Residues 44–81 (CSRCANILKEPVCLGGCEHIFCSGCISDCVGSGCPVCY) form an RING-type zinc finger. Lys-152 is covalently cross-linked (Glycyl lysine isopeptide (Lys-Gly) (interchain with G-Cter in SUMO2)). 3 disordered regions span residues 183-229 (AVPK…EELK), 299-328 (KDLR…GSNI), and 369-410 (NASD…MPAR). The segment covering 195–204 (SAKKHPKKSV) has biased composition (basic residues). The span at 207–229 (INREENLRPETKDSRFDSKEELK) shows a compositional bias: basic and acidic residues. Polar residues predominate over residues 316-328 (PTTSTSDSCGSNI). Ser-378 is subject to Phosphoserine. At Thr-381 the chain carries Phosphothreonine. Residues 391–403 (HRQMMSSPSTVKL) show a composition bias toward polar residues. A Glycyl lysine isopeptide (Lys-Gly) (interchain with G-Cter in SUMO2) cross-link involves residue Lys-411. ANK repeat units lie at residues 415–447 (RGET…VKDH), 448–480 (AGWT…TPGY), and 481–513 (QNDS…AVNI). The ANK 4; degenerate repeat unit spans residues 514-534 (FGVRPVDYTDNENIRSLLLLP). The flexible linker stretch occupies residues 542-546 (TSQCS). BRCT domains follow at residues 549–641 (NTGQ…KYEV) and 655–765 (LLPK…PLDS).

Homo- and heterodimer. Heterodimer (RING-type zinc finger) with BRCA1. Heterodimer (via ANK repeats and BRCT domains) with CSTF1/CSTF-50. Component of the BRCA1-A complex, at least composed of the BRCA1, BARD1, UIMC1/RAP80, ABRAXAS1, BRCC3/BRCC36, BABAM2 and BABAM1/NBA1. Interacts with UBXN1. In terms of processing, processed during apoptosis. The homodimer is more susceptible to proteolytic cleavage than the BARD1/BRCA1 heterodimer.

Its subcellular location is the nucleus. It localises to the cytoplasm. The catalysed reaction is S-ubiquitinyl-[E2 ubiquitin-conjugating enzyme]-L-cysteine + [acceptor protein]-L-lysine = [E2 ubiquitin-conjugating enzyme]-L-cysteine + N(6)-ubiquitinyl-[acceptor protein]-L-lysine.. It participates in protein modification; protein ubiquitination. Its function is as follows. E3 ubiquitin-protein ligase. The BRCA1-BARD1 heterodimer specifically mediates the formation of 'Lys-6'-linked polyubiquitin chains and coordinates a diverse range of cellular pathways such as DNA damage repair, ubiquitination and transcriptional regulation to maintain genomic stability. Plays a central role in the control of the cell cycle in response to DNA damage. Acts by mediating ubiquitin E3 ligase activity that is required for its tumor suppressor function. Also forms a heterodimer with CSTF1/CSTF-50 to modulate mRNA processing and RNAP II stability by inhibiting pre-mRNA 3' cleavage. This Mus musculus (Mouse) protein is BRCA1-associated RING domain protein 1 (Bard1).